The chain runs to 967 residues: Phosphoenolpyruvate carboxylase 1 (967 aa).

At Ser11 the chain carries Phosphoserine. Residues His173 and Lys602 contribute to the active site. Ser704 bears the Phosphoserine mark.

Belongs to the PEPCase type 1 family. As to quaternary structure, homotetramer. The cofactor is Mg(2+). Requires Mn(2+) as cofactor. The phosphorylation of Ser-11 is reversibly promoted by inorganic phosphate (Pi) deprivation. Enhanced activity by phosphorylation at pH 7.3 by lowering Km and sensitivity to inhibition by L-malate and L-aspartate, while enhancing activation by glucose 6-phosphate. Expressed in all plant organs, with higher levels in roots.

Its subcellular location is the cytoplasm. The enzyme catalyses oxaloacetate + phosphate = phosphoenolpyruvate + hydrogencarbonate. Its activity is regulated as follows. By light-reversible phosphorylation. Activated by inorganic phosphate (Pi) deprivation and glucose 6-phosphate. Inhibited by L-malate and L-aspartate. Its function is as follows. Through the carboxylation of phosphoenolpyruvate (PEP) it forms oxaloacetate, a four-carbon dicarboxylic acid source for the tricarboxylic acid cycle. Contributes probably to the adaptation to inorganic phosphate (Pi) deprivation. The chain is Phosphoenolpyruvate carboxylase 1 (PPC1) from Arabidopsis thaliana (Mouse-ear cress).